We begin with the raw amino-acid sequence, 670 residues long: DNA ligase (670 aa).

NAD(+) contacts are provided by residues 33–37 (DAEYD), 82–83 (SL), and E114. K116 acts as the N6-AMP-lysine intermediate in catalysis. NAD(+)-binding residues include R137, E174, K291, and K315. Zn(2+)-binding residues include C409, C412, C427, and C433. The region spanning 593–670 (GAELPLEGKT…TEQDLLELIN (78 aa)) is the BRCT domain.

The protein belongs to the NAD-dependent DNA ligase family. LigA subfamily. It depends on Mg(2+) as a cofactor. Requires Mn(2+) as cofactor.

It carries out the reaction NAD(+) + (deoxyribonucleotide)n-3'-hydroxyl + 5'-phospho-(deoxyribonucleotide)m = (deoxyribonucleotide)n+m + AMP + beta-nicotinamide D-nucleotide.. Its function is as follows. DNA ligase that catalyzes the formation of phosphodiester linkages between 5'-phosphoryl and 3'-hydroxyl groups in double-stranded DNA using NAD as a coenzyme and as the energy source for the reaction. It is essential for DNA replication and repair of damaged DNA. This is DNA ligase from Vibrio parahaemolyticus serotype O3:K6 (strain RIMD 2210633).